Reading from the N-terminus, the 962-residue chain is Putative primase C962R (962 aa).

The region spanning glutamate 607–lysine 775 is the SF3 helicase domain. ATP is bound at residue glycine 636–threonine 643.

Belongs to the asfivirus helicase C962R family.

The polypeptide is Putative primase C962R (African swine fever virus (isolate Pig/Kenya/KEN-50/1950) (ASFV)).